Consider the following 286-residue polypeptide: Nucleotide-binding protein HCH_05324 (286 aa).

8–15 (GRSGSGKS) is a binding site for ATP. 60–63 (DARN) is a binding site for GTP.

The protein belongs to the RapZ-like family.

In terms of biological role, displays ATPase and GTPase activities. The protein is Nucleotide-binding protein HCH_05324 of Hahella chejuensis (strain KCTC 2396).